We begin with the raw amino-acid sequence, 427 residues long: POU domain protein CF1A (427 aa).

Disordered regions lie at residues 39-77 (YMQHHHHHHAAAAAAAHHQLPSSPSPNGQGNGGGLGLGS), 196-217 (HHHMGGGDRDAISGGEEDTPTS), 288-309 (TTGSPTSIDKIAAQGRKRKKRT), and 390-427 (HDMHGSPMGTHSHSHSPPMLSPQNMQSSAVAAHQLAAH). Residues 49–66 (AAAAAAHHQLPSSPSPNG) show a composition bias toward low complexity. Residues 67 to 77 (QGNGGGLGLGS) show a composition bias toward gly residues. In terms of domain architecture, POU-specific spans 212–286 (EDTPTSDDLE…LLQKWLEEAD (75 aa)). The segment at residues 304 to 363 (KRKKRTSIEVSVKGALEQHFHKQPKPSAQEITSLADSLQLEKEVVRVWFCNRRQKEKRMT) is a DNA-binding region (homeobox).

Belongs to the POU transcription factor family. Class-3 subfamily. As to expression, coexpressed with acj6 in overlapping subsets of neurons in the embryonic epidermis and central nervous system. First detected in the precursor of the tracheal pits and the stomodeal invagination and later in the peripheral nervous system.

It is found in the nucleus. In terms of biological role, binds to a DNA sequence element required for the expression of the dopa decarboxylase gene (Ddc) in specific dopaminergic neurons. Could also play an early role in specific ectodermal cells, and a subsequent role in the embryonic nervous system. This Drosophila melanogaster (Fruit fly) protein is POU domain protein CF1A (vvl).